The chain runs to 216 residues: GTP cyclohydrolase 1 (216 aa).

3 residues coordinate Zn(2+): C108, H111, and C179.

The protein belongs to the GTP cyclohydrolase I family. As to quaternary structure, toroid-shaped homodecamer, composed of two pentamers of five dimers.

The enzyme catalyses GTP + H2O = 7,8-dihydroneopterin 3'-triphosphate + formate + H(+). It functions in the pathway cofactor biosynthesis; 7,8-dihydroneopterin triphosphate biosynthesis; 7,8-dihydroneopterin triphosphate from GTP: step 1/1. In Shewanella oneidensis (strain ATCC 700550 / JCM 31522 / CIP 106686 / LMG 19005 / NCIMB 14063 / MR-1), this protein is GTP cyclohydrolase 1.